The primary structure comprises 950 residues: 5'-3' exoribonuclease 2 (950 aa).

A CCHC-type zinc finger spans residues 262 to 278 (PCGLCNQFGHEVKDCEG). N6-acetyllysine is present on lysine 286. Residues 408 to 508 (KDDEDSFRRR…SDSEPEPEDN (101 aa)) are disordered. Residues 416 to 426 (RRQKEKRKRMK) show a composition bias toward basic residues. Threonine 439 bears the Phosphothreonine mark. Positions 445–458 (SRNSPGSQVASNPR) are enriched in polar residues. A phosphoserine mark is found at serine 448, serine 471, serine 473, serine 475, serine 482, serine 487, serine 499, serine 501, and serine 678. Over residues 468–482 (NNSSPSISPNTSFTS) the composition is skewed to low complexity. Asymmetric dimethylarginine; alternate occurs at positions 824, 847, and 851. Residues arginine 824, arginine 847, and arginine 851 each carry the omega-N-methylarginine; alternate modification. Arginine 880 is subject to Asymmetric dimethylarginine. Arginine 883 is modified (asymmetric dimethylarginine; alternate). Omega-N-methylarginine; alternate is present on arginine 883. Arginine 895 carries the post-translational modification Omega-N-methylarginine. The segment at 911-950 (MLAGPGGYPPRRDDRGGRQGYPREGRKYPLPPPSGRYNWN) is disordered. A compositionally biased stretch (basic and acidic residues) spans 920-937 (PRRDDRGGRQGYPREGRK). An Asymmetric dimethylarginine; alternate modification is found at arginine 946. Arginine 946 carries the post-translational modification Omega-N-methylarginine; alternate.

The protein belongs to the 5'-3' exonuclease family. XRN2/RAT1 subfamily. As to quaternary structure, interacts with POLR2A and SMN1/SMN2. Interacts with CDKN2AIP and NKRF. Interacts with CDKN2AIPNL; the interaction is direct. Interacts with TRIM71 (via NHL repeats) in an RNA-dependent manner. Interacts with DHX34; the interaction is RNA-independent. Expressed in the spleen, thymus, prostate, testis, ovary, small intestine, colon, peripheral blood leukocytes, heart, brain, placenta, lung, liver, skeletal muscle, kidney, and pancreas. Isoform 2 is expressed predominantly in peripheral blood leukocytes.

Its subcellular location is the nucleus. The protein localises to the nucleolus. In terms of biological role, possesses 5'-&gt;3' exoribonuclease activity. May promote the termination of transcription by RNA polymerase II. During transcription termination, cleavage at the polyadenylation site liberates a 5' fragment which is subsequently processed to form the mature mRNA and a 3' fragment which remains attached to the elongating polymerase. The processive degradation of this 3' fragment by this protein may promote termination of transcription. Binds to RNA polymerase II (RNAp II) transcription termination R-loops formed by G-rich pause sites. The chain is 5'-3' exoribonuclease 2 (XRN2) from Homo sapiens (Human).